The sequence spans 562 residues: Probable malate:quinone oxidoreductase (562 aa).

The tract at residues 530–562 (EVPDKSATPPDPTIAPKHQHSPTHNANSEMQAL) is disordered. Residues 551–562 (PTHNANSEMQAL) are compositionally biased toward polar residues.

This sequence belongs to the MQO family. FAD is required as a cofactor.

It catalyses the reaction (S)-malate + a quinone = a quinol + oxaloacetate. Its pathway is carbohydrate metabolism; tricarboxylic acid cycle; oxaloacetate from (S)-malate (quinone route): step 1/1. This chain is Probable malate:quinone oxidoreductase, found in Xylella fastidiosa (strain 9a5c).